Consider the following 398-residue polypeptide: Ubiquitin-like modifier-activating enzyme 5 (398 aa).

Positions 79, 100, 123, 146, and 180 each coordinate ATP. Positions 222 and 225 each coordinate Zn(2+). Catalysis depends on cysteine 246, which acts as the Glycyl thioester intermediate. Residues cysteine 299 and cysteine 304 each contribute to the Zn(2+) site. The short motif at 330–342 (VVHEDNEWGIELV) is the UFM1-interacting sequence (UIS) element. The interval 343–373 (SEVTEAELQDASGPIPDLPEGITVAYTIPEK) is linker. A UFC1-binding sequence (UFC) motif is present at residues 383 to 398 (ETEQSLEELMAQMKKI).

It belongs to the ubiquitin-activating E1 family. UBA5 subfamily. As to quaternary structure, homodimer; homodimerization is required for ufm1 activation. Interacts (via UIS motif) with ufm1; binds ufm1 via a trans-binding mechanism in which ufm1 interacts with distinct sites in both subunits of the uba5 homodimer. Interacts (via C-terminus) with ufc1.

It localises to the cytoplasm. It is found in the nucleus. Its subcellular location is the endoplasmic reticulum membrane. The protein localises to the golgi apparatus. E1-like enzyme which specifically catalyzes the first step in ufmylation. Activates ufm1 by first adenylating its C-terminal glycine residue with ATP, and thereafter linking this residue to the side chain of a cysteine residue in E1, yielding a ufm1-E1 thioester and free AMP. Activates ufm1 via a trans-binding mechanism, in which ufm1 interacts with distinct sites in both subunits of the uba5 homodimer. Trans-binding also promotes stabilization of the uba5 homodimer, and enhances ATP-binding. Transfer of ufm1 from uba5 to the E2-like enzyme UFC1 also takes place using a trans mechanism. Ufmylation plays a key role in various processes, such as ribosome recycling, response to DNA damage, interferon response or reticulophagy (also called ER-phagy). The chain is Ubiquitin-like modifier-activating enzyme 5 from Danio rerio (Zebrafish).